The sequence spans 60 residues: MDHRLLEIIACPVCNGKLYYSQDKQELICKLDSLAFPLRDGIPVLLETEARPLALEESHS.

Belongs to the UPF0434 family.

This Klebsiella pneumoniae subsp. pneumoniae (strain ATCC 700721 / MGH 78578) protein is UPF0434 protein KPN78578_09190.